Reading from the N-terminus, the 534-residue chain is Sodium-dependent lysophosphatidylcholine symporter 1 (534 aa).

Residues 1–39 (MAKGEGAESGSAAGLLPTSILQASERPVQVKKEPKKKQQ) are Cytoplasmic-facing. Residues 40-69 (LSICNKLCYAVGGAPYQLTGCALGFFLQIY) traverse the membrane as a helical segment. Topologically, residues 70–80 (LLDVAKVEPLP) are extracellular. A helical membrane pass occupies residues 81–101 (ASIILFVGRAWDAFTDPLVGF). Residues 102-113 (CISKSSWTRLGR) are Cytoplasmic-facing. The helical transmembrane segment at 114 to 133 (LMPWIIFSTPLAIIAYFLIW) threads the bilayer. Over 134 to 148 (FVPDFPSGTESSHGF) the chain is Extracellular. The helical transmembrane segment at 149 to 173 (LWYLLFYCLFETLVTCFHVPYSALT) threads the bilayer. Over 174–180 (MFISTEQ) the chain is Cytoplasmic. Residues 181–212 (SERDSATAYRMTVEVLGTVIGTAIQGQIVGQA) traverse the membrane as a helical segment. Residues 213-232 (KAPCLQDQNGSVVVSEVANR) lie on the Extracellular side of the membrane. Residues Cys-216 and Cys-464 are joined by a disulfide bond. N-linked (GlcNAc...) asparagine glycosylation is found at Asn-221 and Asn-231. A helical transmembrane segment spans residues 233–266 (TQSTASLKDTQNAYLLAAGIIASIYVLCAFILIL). At 267-297 (GVREQRELYESQQAESMPFFQGLRLVMGHGP) the chain is on the cytoplasmic side. The chain crosses the membrane as a helical span at residues 298-324 (YVKLIAGFLFTSLAFMLVEGNFALFCT). Topologically, residues 325–335 (YTLDFRNEFQN) are extracellular. The chain crosses the membrane as a helical span at residues 336-354 (LLLAIMLSATFTIPIWQWF). Topologically, residues 355–358 (LTRF) are cytoplasmic. Residues 359-380 (GKKTAVYIGISSAVPFLILVAL) form a helical membrane-spanning segment. The Extracellular segment spans residues 381 to 383 (MER). The chain crosses the membrane as a helical span at residues 384–420 (NLIVTYVVAVAAGVSVAAAFLLPWSMLPDVIDDFHLK). The Cytoplasmic portion of the chain corresponds to 421 to 430 (HPHSPGTEPI). Residues 431–457 (FFSFYVFFTKFASGVSLGVSTLSLDFA) traverse the membrane as a helical segment. The Extracellular segment spans residues 458–469 (NYQRQGCSQPEQ). The chain crosses the membrane as a helical span at residues 470-493 (VKFTLKMLVTMAPIILILLGLLLF). The Cytoplasmic portion of the chain corresponds to 494–534 (KLYPIDEEKRRQNKKALQALREEASSSGCSDTDSTELASIL).

This sequence belongs to the major facilitator superfamily. N-glycosylated. Widely expressed. Exhibits an oscillatory pattern of expression in brown adipose tissue and liver consistent with a circadian rhythm. Enriched in brain micro-vessels, where it is specifically present in endothelium constituting the blood-brain barrier (at protein level).

It localises to the cell membrane. It is found in the endoplasmic reticulum membrane. The enzyme catalyses a 1-acyl-sn-glycero-3-phosphocholine(in) + Na(+)(in) = a 1-acyl-sn-glycero-3-phosphocholine(out) + Na(+)(out). The catalysed reaction is 1-(4Z,7Z,10Z,13Z,16Z,19Z-docosahexaenoyl)-sn-glycero-3-phosphocholine(in) + Na(+)(in) = 1-(4Z,7Z,10Z,13Z,16Z,19Z-docosahexaenoyl)-sn-glycero-3-phosphocholine(out) + Na(+)(out). It carries out the reaction 1-(9Z-octadecenoyl)-sn-glycero-3-phosphocholine(in) + Na(+)(in) = 1-(9Z-octadecenoyl)-sn-glycero-3-phosphocholine(out) + Na(+)(out). It catalyses the reaction 1-hexadecanoyl-sn-glycero-3-phosphocholine(in) + Na(+)(in) = 1-hexadecanoyl-sn-glycero-3-phosphocholine(out) + Na(+)(out). The enzyme catalyses a 1-acyl-sn-glycero-3-phosphoethanolamine(in) + Na(+)(in) = a 1-acyl-sn-glycero-3-phosphoethanolamine(out) + Na(+)(out). Functionally, sodium-dependent lysophosphatidylcholine (LPC) symporter, which plays an essential role for blood-brain barrier formation and function. Specifically expressed in endothelium of the blood-brain barrier of micro-vessels and transports LPC into the brain. Transport of LPC is essential because it constitutes the major mechanism by which docosahexaenoic acid (DHA), an omega-3 fatty acid that is essential for normal brain growth and cognitive function, enters the brain. Transports LPC carrying long-chain fatty acids such LPC oleate and LPC palmitate with a minimum acyl chain length of 14 carbons. Does not transport docosahexaenoic acid in unesterified fatty acid. Not required for central nervous system vascular morphogenesis. The sequence is that of Sodium-dependent lysophosphatidylcholine symporter 1 from Mus musculus (Mouse).